Here is a 185-residue protein sequence, read N- to C-terminus: Ribosome-recycling factor (185 aa).

This sequence belongs to the RRF family.

Its subcellular location is the cytoplasm. Its function is as follows. Responsible for the release of ribosomes from messenger RNA at the termination of protein biosynthesis. May increase the efficiency of translation by recycling ribosomes from one round of translation to another. The chain is Ribosome-recycling factor from Xanthomonas campestris pv. campestris (strain 8004).